Reading from the N-terminus, the 84-residue chain is MANPFRAEVKQLYKALLFLGREYPKGADYFRERLRAAFAKNKDMRDPDKIKQLISRGEFVVKELEALYYLRKYRALKKRYYEAE.

This sequence belongs to the complex I LYR family.

The polypeptide is LYR motif-containing protein 5B (lyrm5b) (Danio rerio (Zebrafish)).